We begin with the raw amino-acid sequence, 256 residues long: Fumarate reductase cytochrome b subunit (256 aa).

The Cytoplasmic portion of the chain corresponds to 1 to 30 (MTNESILESYSGVTPERKKSRMPAKLDWWQ). The chain crosses the membrane as a helical span at residues 31–52 (SATGLFLGLFMIGHMFFVSTIL). His-44 is a heme b binding site. Residues 53–76 (LGDNVMLWVTKKFELDFIFEGGKP) are Periplasmic-facing. A helical transmembrane segment spans residues 77–98 (IVVSFLAAFVFAVFIAHAFLAM). His-93 is a binding site for heme b. At 99-124 (RKFPINYRQYLTFKTHKDLMRHGDTT) the chain is on the cytoplasmic side. The chain crosses the membrane as a helical span at residues 125-149 (LWWIQAMTGFAMFFLGSVHLYIMMT). His-143 contacts heme b. Topologically, residues 150 to 165 (QPQTIGPVSSSFRMVS) are periplasmic. Residues 166 to 188 (EWMWPLYLVLLFAVELHGSVGLY) traverse the membrane as a helical segment. His-182 lines the heme b pocket. At 189 to 206 (RLAVKWGWFDGETPDKTR) the chain is on the cytoplasmic side. Residues 207–230 (ANLKKLKTLMSAFLIVLGLLTFGA) form a helical membrane-spanning segment. Residues 231–256 (YVKKGLEQTDPNIDYKYFDYKRTHHR) lie on the Periplasmic side of the membrane.

It belongs to the diheme cytochrome b FrdC family. In terms of assembly, part of an enzyme complex containing three subunits: a flavoprotein (frdA), an iron-sulfur protein (frdB), and diheme cytochrome b (frdC). Heme b serves as cofactor.

Its subcellular location is the cell inner membrane. In terms of biological role, the fumarate reductase enzyme complex is required for fumarate respiration using formate or sulfide as electron donor. This subunit anchors the complex in the membrane and binds a diheme cytochrome b. The sequence is that of Fumarate reductase cytochrome b subunit (frdC) from Wolinella succinogenes (strain ATCC 29543 / DSM 1740 / CCUG 13145 / JCM 31913 / LMG 7466 / NCTC 11488 / FDC 602W) (Vibrio succinogenes).